A 220-amino-acid chain; its full sequence is Adenylate kinase (220 aa).

Residue 10 to 15 (GAGKGT) coordinates ATP. Residues 30-59 (STGDMLRAAVKAGTPLGVEAKGYMDAGKLV) are NMP. AMP contacts are provided by residues T31, R36, 57-59 (KLV), 85-88 (GFPR), and Q92. Residues 122–159 (GRRTHPASGRTYHVKFNPPKVEGHDDVTGEPLIQRDDD) are LID. ATP-binding positions include R123 and 132–133 (TY). R156 and R167 together coordinate AMP. G206 lines the ATP pocket.

Belongs to the adenylate kinase family. As to quaternary structure, monomer.

It is found in the cytoplasm. It catalyses the reaction AMP + ATP = 2 ADP. Its pathway is purine metabolism; AMP biosynthesis via salvage pathway; AMP from ADP: step 1/1. Catalyzes the reversible transfer of the terminal phosphate group between ATP and AMP. Plays an important role in cellular energy homeostasis and in adenine nucleotide metabolism. The sequence is that of Adenylate kinase from Burkholderia lata (strain ATCC 17760 / DSM 23089 / LMG 22485 / NCIMB 9086 / R18194 / 383).